Reading from the N-terminus, the 379-residue chain is F-box protein At1g30200 (379 aa).

The F-box domain occupies D24 to D72.

The chain is F-box protein At1g30200 from Arabidopsis thaliana (Mouse-ear cress).